We begin with the raw amino-acid sequence, 514 residues long: Serine--tRNA ligase, cytoplasmic (514 aa).

Met-1 carries the post-translational modification N-acetylmethionine. The interval 9-61 (RVDKGGDPALIRETQEKRFKDPGLVDQLVKADSEWRRCRFRADNLNKLKNLCS) is interaction with tRNA. Ser-241 is modified (phosphoserine). The L-serine site is built by Thr-271 and Arg-302. Residues 302 to 304 (RQE) and 318 to 321 (VHQF) contribute to the ATP site. Lys-323 carries the N6-acetyllysine modification. Glu-325 contributes to the L-serine binding site. ATP is bound at residue 391-394 (ELVS). Asn-427 is a binding site for L-serine. The interval 473–514 (PAPIEQEPSKKQKKQHEGSKKKAAARDVTLENRLQNMEVTDA) is disordered. The span at 479-502 (EPSKKQKKQHEGSKKKAAARDVTL) shows a compositional bias: basic and acidic residues. A Nuclear localization signal motif is present at residues 482 to 494 (KKQKKQHEGSKKK). Over residues 504–514 (NRLQNMEVTDA) the composition is skewed to polar residues.

It belongs to the class-II aminoacyl-tRNA synthetase family. Type-1 seryl-tRNA synthetase subfamily. Homodimer. The tRNA molecule may bind across the dimer. Interacts with SIRT2. Interacts with METTL6; interaction is required for the tRNA N(3)-methylcytidine methyltransferase activity of METTL6. In terms of tissue distribution, brain.

The protein resides in the cytoplasm. It is found in the nucleus. The enzyme catalyses tRNA(Ser) + L-serine + ATP = L-seryl-tRNA(Ser) + AMP + diphosphate + H(+). It catalyses the reaction tRNA(Sec) + L-serine + ATP = L-seryl-tRNA(Sec) + AMP + diphosphate + H(+). It functions in the pathway aminoacyl-tRNA biosynthesis; selenocysteinyl-tRNA(Sec) biosynthesis; L-seryl-tRNA(Sec) from L-serine and tRNA(Sec): step 1/1. Functionally, catalyzes the attachment of serine to tRNA(Ser) in a two-step reaction: serine is first activated by ATP to form Ser-AMP and then transferred to the acceptor end of tRNA(Ser). Is probably also able to aminoacylate tRNA(Sec) with serine, to form the misacylated tRNA L-seryl-tRNA(Sec), which will be further converted into selenocysteinyl-tRNA(Sec). In the nucleus, binds to the VEGFA core promoter and prevents MYC binding and transcriptional activation by MYC. Recruits SIRT2 to the VEGFA promoter, promoting deacetylation of histone H4 at 'Lys-16' (H4K16). Thereby, inhibits the production of VEGFA and sprouting angiogenesis mediated by VEGFA. This is Serine--tRNA ligase, cytoplasmic from Homo sapiens (Human).